Consider the following 362-residue polypeptide: Transcriptional repressor PifC (362 aa).

In terms of biological role, transcription repression of its own gene by binding to the PIF operator (pifO) and replication initiation from the primary origin (ori-1). Transcriptional repressor of the pifA and pifB. This Escherichia coli (strain K12) protein is Transcriptional repressor PifC (pifC).